A 130-amino-acid polypeptide reads, in one-letter code: S-adenosylmethionine decarboxylase proenzyme (130 aa).

The Schiff-base intermediate with substrate; via pyruvic acid role is filled by Ser64. A Pyruvic acid (Ser); by autocatalysis modification is found at Ser64. Residue His69 is the Proton acceptor; for processing activity of the active site. Cys84 (proton donor; for catalytic activity) is an active-site residue.

The protein belongs to the prokaryotic AdoMetDC family. Type 1 subfamily. Heterotetramer of two alpha and two beta chains arranged as a dimer of alpha/beta heterodimers. Pyruvate is required as a cofactor. Post-translationally, is synthesized initially as an inactive proenzyme. Formation of the active enzyme involves a self-maturation process in which the active site pyruvoyl group is generated from an internal serine residue via an autocatalytic post-translational modification. Two non-identical subunits are generated from the proenzyme in this reaction, and the pyruvate is formed at the N-terminus of the alpha chain, which is derived from the carboxyl end of the proenzyme. The post-translation cleavage follows an unusual pathway, termed non-hydrolytic serinolysis, in which the side chain hydroxyl group of the serine supplies its oxygen atom to form the C-terminus of the beta chain, while the remainder of the serine residue undergoes an oxidative deamination to produce ammonia and the pyruvoyl group blocking the N-terminus of the alpha chain.

It catalyses the reaction S-adenosyl-L-methionine + H(+) = S-adenosyl 3-(methylsulfanyl)propylamine + CO2. It functions in the pathway amine and polyamine biosynthesis; S-adenosylmethioninamine biosynthesis; S-adenosylmethioninamine from S-adenosyl-L-methionine: step 1/1. Catalyzes the decarboxylation of S-adenosylmethionine to S-adenosylmethioninamine (dcAdoMet), the propylamine donor required for the synthesis of the polyamines spermine and spermidine from the diamine putrescine. This Thermoplasma volcanium (strain ATCC 51530 / DSM 4299 / JCM 9571 / NBRC 15438 / GSS1) protein is S-adenosylmethionine decarboxylase proenzyme.